An 87-amino-acid polypeptide reads, in one-letter code: Small ribosomal subunit protein uS15c (87 aa).

Residues 1–20 (MNQNLSIRKRNKLKQDSGSP) are disordered.

It belongs to the universal ribosomal protein uS15 family. In terms of assembly, part of the 30S ribosomal subunit.

It is found in the plastid. It localises to the chloroplast. The chain is Small ribosomal subunit protein uS15c (rps15) from Zygnema circumcarinatum (Green alga).